We begin with the raw amino-acid sequence, 1957 residues long: Sporulation-specific protein 15 (1957 aa).

Low complexity-rich tracts occupy residues 1–12 (MSNQSSSGSNTS) and 19–28 (ASSLVSSAAS). A disordered region spans residues 1-102 (MSNQSSSGSN…STASSALPLT (102 aa)). The segment covering 58-83 (SQHEDSSEELKRQEVRGMRRHSDLSI) has biased composition (basic and acidic residues). Residues 90-102 (SEGSTASSALPLT) show a composition bias toward polar residues. Ser105 is modified (phosphoserine). Coiled coils occupy residues 199-785 (KQSE…FTSL), 804-1235 (VNMQ…DLLD), 1320-1471 (KVVA…SLDD), and 1481-1723 (EKLG…EQHE).

This sequence belongs to the MPC70 family. In terms of assembly, monomer.

It is found in the cytoplasm. It localises to the cytoskeleton. The protein localises to the microtubule organizing center. The protein resides in the spindle pole body. In terms of biological role, has a role in the initiation of spore membrane formation. This Schizosaccharomyces pombe (strain 972 / ATCC 24843) (Fission yeast) protein is Sporulation-specific protein 15 (spo15).